We begin with the raw amino-acid sequence, 485 residues long: Glutamate--tRNA ligase (485 aa).

A 'HIGH' region motif is present at residues 12-22; it reads PSPTGYMHIGN. The short motif at 253-257 is the 'KMSKS' region element; the sequence is KLSKR. An ATP-binding site is contributed by Lys-256.

It belongs to the class-I aminoacyl-tRNA synthetase family. Glutamate--tRNA ligase type 1 subfamily. As to quaternary structure, monomer.

The protein localises to the cytoplasm. It catalyses the reaction tRNA(Glu) + L-glutamate + ATP = L-glutamyl-tRNA(Glu) + AMP + diphosphate. Its function is as follows. Catalyzes the attachment of glutamate to tRNA(Glu) in a two-step reaction: glutamate is first activated by ATP to form Glu-AMP and then transferred to the acceptor end of tRNA(Glu). This Clostridium acetobutylicum (strain ATCC 824 / DSM 792 / JCM 1419 / IAM 19013 / LMG 5710 / NBRC 13948 / NRRL B-527 / VKM B-1787 / 2291 / W) protein is Glutamate--tRNA ligase.